The primary structure comprises 975 residues: Glycine dehydrogenase (decarboxylating) (975 aa).

Lysine 723 carries the post-translational modification N6-(pyridoxal phosphate)lysine.

The protein belongs to the GcvP family. In terms of assembly, the glycine cleavage system is composed of four proteins: P, T, L and H. Pyridoxal 5'-phosphate is required as a cofactor.

It carries out the reaction N(6)-[(R)-lipoyl]-L-lysyl-[glycine-cleavage complex H protein] + glycine + H(+) = N(6)-[(R)-S(8)-aminomethyldihydrolipoyl]-L-lysyl-[glycine-cleavage complex H protein] + CO2. Its function is as follows. The glycine cleavage system catalyzes the degradation of glycine. The P protein binds the alpha-amino group of glycine through its pyridoxal phosphate cofactor; CO(2) is released and the remaining methylamine moiety is then transferred to the lipoamide cofactor of the H protein. The sequence is that of Glycine dehydrogenase (decarboxylating) from Burkholderia multivorans (strain ATCC 17616 / 249).